Consider the following 401-residue polypeptide: Steroid C26-monooxygenase (401 aa).

C343 is a binding site for heme.

Belongs to the cytochrome P450 family. Heme is required as a cofactor.

It carries out the reaction cholest-4-en-3-one + 6 reduced [2Fe-2S]-[ferredoxin] + 3 O2 + 5 H(+) = (25R)-3-oxocholest-4-en-26-oate + 6 oxidized [2Fe-2S]-[ferredoxin] + 4 H2O. It functions in the pathway steroid metabolism; cholesterol degradation. In terms of biological role, involved in the utilization of cholesterol as the sole carbon and energy source by degrading the side chain. Primarily catalyzes the sequential oxidation of the terminal methyl of cholest-4-en-3-one into (25R)-26-hydroxycholest-4-en-3-one (alcohol), (25R)-26-oxocholest-4-en-3-one (aldehyde), to finally yield the carboxylic acid (25R)-3-oxocholest-4-en-26-oate. Also able to sequentially oxidize cholesterol itself, not only cholest-4-en-3-one. The sequence is that of Steroid C26-monooxygenase from Mycolicibacterium smegmatis (strain ATCC 700084 / mc(2)155) (Mycobacterium smegmatis).